The following is a 397-amino-acid chain: Serpin B10 (397 aa).

The disordered stretch occupies residues R62–S85. Residues P70–E79 show a composition bias toward basic and acidic residues. Residues K74 to K77 carry the Nuclear localization signal motif.

The protein belongs to the serpin family. Ov-serpin subfamily.

The protein resides in the nucleus. Its subcellular location is the cytoplasm. Functionally, protease inhibitor that may play a role in the regulation of protease activities during hematopoiesis and apoptosis induced by TNF. May regulate protease activities in the cytoplasm and in the nucleus. The polypeptide is Serpin B10 (SERPINB10) (Papio anubis (Olive baboon)).